The chain runs to 405 residues: Pleckstrin homology-like domain family A member 1 (405 aa).

Composition is skewed to basic and acidic residues over residues 1–11 and 54–63; these read MRRTPAAERLS and RSPEDGREQP. 3 disordered regions span residues 1–67, 189–217, and 293–405; these read MRRT…AHGS, QLQQQQQQQQPGQGTAEPSQPSGPTVASL, and QQHL…SNSA. The 125-residue stretch at 153–277 folds into the PH domain; that stretch reads ALKEGVLEKR…AEITLQMVQY (125 aa). The segment covering 189-202 has biased composition (low complexity); it reads QLQQQQQQQQPGQG. The segment covering 204–213 has biased composition (polar residues); the sequence is AEPSQPSGPT. A compositionally biased stretch (low complexity) spans 294-309; it reads QHLVQQQPPQTQQIQP. The 16 X 2 AA repeats of P-Q stretch occupies residues 309-344; it reads PQPQPQIQPQPQPQIQPQPQPQPQPQPQPQPQPQPQ. Over residues 310-342 the composition is skewed to pro residues; the sequence is QPQPQIQPQPQPQIQPQPQPQPQPQPQPQPQPQ. Residues 350–376 show a composition bias toward basic residues; that stretch reads PHPHPHPYSHPHQHPHPHPHPHPHPHP. Residues 354–377 are 11 X 2 AA repeats of P-H; sequence PHPYSHPHQHPHPHPHPHPHPHPH. Residues 378-389 show a composition bias toward low complexity; sequence PYQLQHAHQPLH.

Interacts with RPL14, EIF3S7 and PABPC4. In terms of tissue distribution, widely expressed with very high levels in adult liver and high levels in adult lung. According to PubMed:10428057 expressed at low levels in liver. Expressed at increased levels in atherosclerotic lesions observed in hyperhomocysteinema.

The protein resides in the cytoplasm. It localises to the cytoplasmic vesicle. The protein localises to the nucleus. Its subcellular location is the nucleolus. Seems to be involved in regulation of apoptosis. May be involved in detachment-mediated programmed cell death. May mediate apoptosis during neuronal development. May be involved in regulation of anti-apoptotic effects of IGF1. Required for TCR-induced apoptosis and expression of TNFRSF6/FAS in a T-cell hybridoma cell line. May be involved in translational regulation. The sequence is that of Pleckstrin homology-like domain family A member 1 (Phlda1) from Mus musculus (Mouse).